The chain runs to 159 residues: NAD(P)H-quinone oxidoreductase subunit J, chloroplastic (159 aa).

It belongs to the complex I 30 kDa subunit family. NDH is composed of at least 16 different subunits, 5 of which are encoded in the nucleus.

It localises to the plastid. Its subcellular location is the chloroplast thylakoid membrane. The enzyme catalyses a plastoquinone + NADH + (n+1) H(+)(in) = a plastoquinol + NAD(+) + n H(+)(out). The catalysed reaction is a plastoquinone + NADPH + (n+1) H(+)(in) = a plastoquinol + NADP(+) + n H(+)(out). Its function is as follows. NDH shuttles electrons from NAD(P)H:plastoquinone, via FMN and iron-sulfur (Fe-S) centers, to quinones in the photosynthetic chain and possibly in a chloroplast respiratory chain. The immediate electron acceptor for the enzyme in this species is believed to be plastoquinone. Couples the redox reaction to proton translocation, and thus conserves the redox energy in a proton gradient. This chain is NAD(P)H-quinone oxidoreductase subunit J, chloroplastic, found in Oryza nivara (Indian wild rice).